We begin with the raw amino-acid sequence, 94 residues long: Long neurotoxin LNTX1 (94 aa).

The first 21 residues, 1–21, serve as a signal peptide directing secretion; sequence MKILLLTLVVVTIMCLDLGYT. Intrachain disulfides connect Cys-24-Cys-43, Cys-36-Cys-64, Cys-49-Cys-53, Cys-68-Cys-79, and Cys-80-Cys-85.

This sequence belongs to the three-finger toxin family. Long-chain subfamily. Type II alpha-neurotoxin sub-subfamily. As to quaternary structure, monomer. As to expression, expressed by the venom gland.

The protein resides in the secreted. Binds with high affinity to muscular (alpha-1/CHRNA1) and neuronal (alpha-7/CHRNA7) nicotinic acetylcholine receptor (nAChR) and inhibits acetylcholine from binding to the receptor, thereby impairing neuromuscular and neuronal transmission. Recombinant LNTX1 leads to a functional block of the muscle-type acetylcholine receptors. Has a cytotoxic activity. This chain is Long neurotoxin LNTX1, found in Ophiophagus hannah (King cobra).